Consider the following 284-residue polypeptide: Tropomyosin (284 aa).

Residues 1 to 284 adopt a coiled-coil conformation; sequence MDAIKKKMQA…DQTFQELSGY (284 aa). Over residues 110 to 142 the composition is skewed to basic and acidic residues; sequence TAKLEEATHTADESERVRKVMENRSFQDEERAN. A disordered region spans residues 110-143; sequence TAKLEEATHTADESERVRKVMENRSFQDEERANT.

The protein belongs to the tropomyosin family.

Its function is as follows. Tropomyosin, in association with the troponin complex, plays a central role in the calcium dependent regulation of muscle contraction. This Anisakis simplex (Herring worm) protein is Tropomyosin.